A 320-amino-acid polypeptide reads, in one-letter code: Olfactory receptor 2C3 (320 aa).

Residues 1–26 (MMEIANVSSPEVFVLLGFSTRPSLET) lie on the Extracellular side of the membrane. A glycan (N-linked (GlcNAc...) asparagine) is linked at asparagine 6. The chain crosses the membrane as a helical span at residues 27-50 (VLFIVVLSFYMVSILGNGIIILVS). Residues 51–58 (HTDVHLHT) lie on the Cytoplasmic side of the membrane. Residues 59–80 (PMYFFLANLPFLDMSFTTSIVP) form a helical membrane-spanning segment. Topologically, residues 81–101 (QLLANLWGPQKTISYGGCVVQ) are extracellular. Cysteine 98 and cysteine 190 form a disulfide bridge. The helical transmembrane segment at 102-121 (FYISHWLGATECVLLATMSY) threads the bilayer. Topologically, residues 122–140 (DRYAAICRPLHYTVIMHPQ) are cytoplasmic. A helical membrane pass occupies residues 141 to 159 (LCLGLALASWLGGLTTSMV). The Extracellular portion of the chain corresponds to 160–196 (GSTLTMLLPLCGNNCIDHFFCEMPLIMQLACVDTSLN). The chain crosses the membrane as a helical span at residues 197 to 220 (EMEMYLASFVFVVLPLGLILVSYG). Topologically, residues 221–237 (HIARAVLKIRSAEGRRK) are cytoplasmic. A helical membrane pass occupies residues 238 to 260 (AFNTCSSHVAVVSLFYGSIIFMY). Topologically, residues 261–273 (LQPAKSTSHEQGK) are extracellular. Residues 274-293 (FIALFYTVVTPALNPLIYTL) form a helical membrane-spanning segment. Topologically, residues 294-320 (RNTEVKSALRHMVLENCCGSAGKLAQI) are cytoplasmic.

Belongs to the G-protein coupled receptor 1 family.

The protein localises to the cell membrane. Functionally, odorant receptor. In Homo sapiens (Human), this protein is Olfactory receptor 2C3 (OR2C3).